Reading from the N-terminus, the 559-residue chain is Poly(U)-binding-splicing factor PUF60 (559 aa).

The inhibits homodimerization stretch occupies residues 1–516 (MATATIALQV…EDAEIIVKIF (516 aa)). Glycyl lysine isopeptide (Lys-Gly) (interchain with G-Cter in SUMO2) cross-links involve residues Q14 and K43. The residue at position 60 (T60) is a Phosphothreonine. Residues 77 to 559 (QSIKSVLVKQ…ERFDNSDLSA (483 aa)) are inhibits transcriptional repression, interaction with ERCC3 and apoptosis induction. Residue K80 forms a Glycyl lysine isopeptide (Lys-Gly) (interchain with G-Cter in SUMO2) linkage. The residue at position 112 (S112) is a Phosphoserine. RRM domains lie at 129-207 (CRVY…RPSN) and 226-304 (NRIY…KAVT). S244 bears the Phosphoserine mark. Position 251 is an N6-acetyllysine (K251). T314 is modified (phosphothreonine). The tract at residues 416-437 (KKEKEEEELFPESERPEMLSEQ) is disordered. K419 is covalently cross-linked (Glycyl lysine isopeptide (Lys-Gly) (interchain with G-Cter in SUMO2)). Residues 427–437 (ESERPEMLSEQ) are compositionally biased toward basic and acidic residues. N6-acetyllysine is present on K454. A Glycyl lysine isopeptide (Lys-Gly) (interchain with G-Cter in SUMO2) cross-link involves residue K458. The 88-residue stretch at 462–549 (TVMVLRNMVD…RKVVAEVYDQ (88 aa)) folds into the RRM 3; atypical domain.

Belongs to the RRM half pint family. As to quaternary structure, homodimer. Associates with the spliceosome. Found in a complex with RO60 and Y5 RNA. Found in a complex with FUBP1 and far upstream element (FUSE) DNA segment. Interacts directly with ERCC3. Interacts with CDK7 and GTF2H1. Interacts with SRSF11/P54. Does not interact with ERCC3 in xeroderma pigmentosum complementation group B (XPB) cells. Interacts with ARGLU1; interaction may be involved in ARGLU1-mediated modulation of alternative splicing. In terms of tissue distribution, isoform 2 is expressed in colonic epithelium and colorectal epithelium cancer (at protein level). Isoform 6 is expressed in colorectal epithelial cancer but below detection level in colonic epithelium. Expressed in heart, brain, placenta, lung, liver, skeletal muscle, kidney, pancreas, spleen, thymus, prostate, testis, ovary, small intestine, colon and peripheral blood leukocytes.

Its subcellular location is the nucleus. Its function is as follows. DNA- and RNA-binding protein, involved in several nuclear processes such as pre-mRNA splicing, apoptosis and transcription regulation. In association with FUBP1 regulates MYC transcription at the P2 promoter through the core-TFIIH basal transcription factor. Acts as a transcriptional repressor through the core-TFIIH basal transcription factor. Represses FUBP1-induced transcriptional activation but not basal transcription. Decreases ERCC3 helicase activity. Does not repress TFIIH-mediated transcription in xeroderma pigmentosum complementation group B (XPB) cells. Is also involved in pre-mRNA splicing. Promotes splicing of an intron with weak 3'-splice site and pyrimidine tract in a cooperative manner with U2AF2. Involved in apoptosis induction when overexpressed in HeLa cells. Isoform 6 failed to repress MYC transcription and inhibited FIR-induced apoptosis in colorectal cancer. Isoform 6 may contribute to tumor progression by enabling increased MYC expression and greater resistance to apoptosis in tumors than in normal cells. Modulates alternative splicing of several mRNAs. Binds to relaxed DNA of active promoter regions. Binds to the pyrimidine tract and 3'-splice site regions of pre-mRNA; binding is enhanced in presence of U2AF2. Binds to Y5 RNA in association with RO60. Binds to poly(U) RNA. This is Poly(U)-binding-splicing factor PUF60 from Homo sapiens (Human).